The chain runs to 261 residues: THO complex subunit THP2 (261 aa).

In terms of assembly, component of the THO complex, which is composed of HPR1, MFT1, THO2 and THP2. Together with SUB2, TEX1 and YRA1, THO forms the transcription/export (TREX) complex. THO associates with DNA and RNA in vitro.

Its subcellular location is the nucleus. Component the THO subcomplex of the TREX complex, which operates in coupling transcription elongation to mRNA export. The THO complex is recruited to transcribed genes and moves along the gene with the elongating polymerase during transcription. THO is important for stabilizing nascent RNA in the RNA polymerase II elongation complex by preventing formation of DNA:RNA hybrids behind the elongating polymerase. It functions in cotranscriptional formation of an export-competent messenger ribonucleoprotein particle (mRNP) by facilitating the loading of ATP-dependent RNA helicase SUB2 and the mRNA export factor YRA1 along the nascent mRNA. This is THO complex subunit THP2 (THP2) from Saccharomyces cerevisiae (strain ATCC 204508 / S288c) (Baker's yeast).